The following is a 75-amino-acid chain: Kappa-thalatoxin-Cad2a (75 aa).

Residues 1-22 (MKFQMIAAVLLIAFCLCVVVTA) form the signal peptide. Positions 23 to 40 (RMELQDVEDMKNGSFQKR) are excised as a propeptide. One can recognise a ShKT domain in the interval 43 to 75 (CIDTIPKSRCTAFQCKNSMKYRLSFCRKTCGTC). 3 disulfides stabilise this stretch: Cys-43–Cys-75, Cys-52–Cys-68, and Cys-57–Cys-72.

The protein belongs to the sea anemone type 1 potassium channel toxin family. Type 1a subfamily.

It localises to the secreted. Its subcellular location is the nematocyst. Inhibits voltage-gated potassium channels (Kv) with higher potency for Kv1.1/KCNA1 and Kv1.3/KCNA3. The chain is Kappa-thalatoxin-Cad2a from Cryptodendrum adhaesivum (Adhesive sea anemone).